The sequence spans 201 residues: Potassium-transporting ATPase KdpC subunit (201 aa).

The helical transmembrane segment at 17-37 (LLTGLAYPLAMTGLAGILFPV) threads the bilayer.

The protein belongs to the KdpC family. In terms of assembly, the system is composed of three essential subunits: KdpA, KdpB and KdpC.

The protein localises to the cell inner membrane. In terms of biological role, part of the high-affinity ATP-driven potassium transport (or Kdp) system, which catalyzes the hydrolysis of ATP coupled with the electrogenic transport of potassium into the cytoplasm. This subunit acts as a catalytic chaperone that increases the ATP-binding affinity of the ATP-hydrolyzing subunit KdpB by the formation of a transient KdpB/KdpC/ATP ternary complex. The polypeptide is Potassium-transporting ATPase KdpC subunit (Methylobacterium nodulans (strain LMG 21967 / CNCM I-2342 / ORS 2060)).